The chain runs to 889 residues: DNA gyrase subunit A (889 aa).

Positions 35 to 501 (LPDVRDGLKP…GFEDLEDEDL (467 aa)) constitute a Topo IIA-type catalytic domain. Catalysis depends on Tyr123, which acts as the O-(5'-phospho-DNA)-tyrosine intermediate. The GyrA-box signature appears at 528-534 (QNRGGRG). Residues 811 to 889 (KEDAEDETNE…IQQSSDEDEE (79 aa)) form a disordered region. The span at 813-823 (DAEDETNEDEQ) shows a compositional bias: acidic residues. The span at 863 to 875 (DGRIEVRQDFMDR) shows a compositional bias: basic and acidic residues. Acidic residues predominate over residues 876–889 (VEEDIQQSSDEDEE).

It belongs to the type II topoisomerase GyrA/ParC subunit family. Heterotetramer, composed of two GyrA and two GyrB chains. In the heterotetramer, GyrA contains the active site tyrosine that forms a transient covalent intermediate with DNA, while GyrB binds cofactors and catalyzes ATP hydrolysis.

The protein resides in the cytoplasm. It catalyses the reaction ATP-dependent breakage, passage and rejoining of double-stranded DNA.. Its function is as follows. A type II topoisomerase that negatively supercoils closed circular double-stranded (ds) DNA in an ATP-dependent manner to modulate DNA topology and maintain chromosomes in an underwound state. Negative supercoiling favors strand separation, and DNA replication, transcription, recombination and repair, all of which involve strand separation. Also able to catalyze the interconversion of other topological isomers of dsDNA rings, including catenanes and knotted rings. Type II topoisomerases break and join 2 DNA strands simultaneously in an ATP-dependent manner. This is DNA gyrase subunit A from Staphylococcus aureus (strain Mu50 / ATCC 700699).